The following is a 318-amino-acid chain: cAMP/cGMP dual specificity phosphodiesterase MT0825 (318 aa).

Fe cation contacts are provided by Asp-21, His-23, and Asp-63. AMP contacts are provided by residues His-23, Asp-63, and 97-98 (NH). Mn(2+) contacts are provided by Asp-63, Asn-97, His-169, and His-207. Residue His-209 coordinates Fe cation. His-209 contributes to the AMP binding site. The tract at residues 278–318 (PGQARRKIAESGIFIEPSRRDSLFKHPPMVLTSSAPRSPVD) is C-terminal extension.

Belongs to the cyclic nucleotide phosphodiesterase class-III family. In terms of assembly, homodimer. Requires Fe(3+) as cofactor. The cofactor is Mn(2+).

The protein resides in the cytoplasm. Its subcellular location is the cell membrane. It is found in the secreted. The protein localises to the cell wall. It localises to the cell envelope. It catalyses the reaction a nucleoside 2',3'-cyclic phosphate + H2O = a nucleoside 3'-phosphate + H(+). The enzyme catalyses 2',3'-cyclophospho-AMP + H2O = 3'-AMP + H(+). The catalysed reaction is 2',3'-cyclophospho-GMP + H2O = 3'-GMP + H(+). It carries out the reaction a nucleoside 3',5'-cyclic phosphate + H2O = a nucleoside 5'-phosphate + H(+). It catalyses the reaction 3',5'-cyclic AMP + H2O = AMP + H(+). The enzyme catalyses 3',5'-cyclic GMP + H2O = GMP + H(+). In terms of biological role, cyclic nucleotide phosphodiesterase with a dual-specificity for the second messengers cAMP and cGMP. This chain is cAMP/cGMP dual specificity phosphodiesterase MT0825, found in Mycobacterium tuberculosis (strain CDC 1551 / Oshkosh).